Consider the following 505-residue polypeptide: Trans-cinnamate 4-monooxygenase (505 aa).

Residues 3-23 (LLLVEKTLLALFAAIIASIFI) traverse the membrane as a helical segment. Residues 213-218 (RSRLAQ) and Ala306 contribute to the (E)-cinnamate site. Residue Cys447 participates in heme binding.

The protein belongs to the cytochrome P450 family. Heme serves as cofactor.

It localises to the membrane. The enzyme catalyses (E)-cinnamate + reduced [NADPH--hemoprotein reductase] + O2 = (E)-4-coumarate + oxidized [NADPH--hemoprotein reductase] + H2O + H(+). Its pathway is phenylpropanoid metabolism; trans-4-coumarate biosynthesis; trans-4-coumarate from trans-cinnamate: step 1/1. In terms of biological role, catalyzes the first oxidative step of the phenylpropanoid pathway in higher plants by transforming trans-cinnamate into p-coumarate. The compounds formed by this pathway are essential components for lignification, pollination, and defense against ultraviolet light, predators and pathogens. The protein is Trans-cinnamate 4-monooxygenase (CYP73A12) of Zinnia elegans (Garden zinnia).